A 278-amino-acid polypeptide reads, in one-letter code: Translation initiation factor IF-3, mitochondrial (278 aa).

The N-terminal 31 residues, 1–31 (MAALFLKRLTLQTVKSENSCIRCFGKHILQK), are a transit peptide targeting the mitochondrion. The segment at 249 to 278 (KAYKETQETQERDTLNKDHGNDKESNVLHQ) is disordered.

The protein belongs to the IF-3 family.

The protein localises to the mitochondrion. Functionally, IF-3 binds to the 28S ribosomal subunit and shifts the equilibrium between 55S ribosomes and their 39S and 28S subunits in favor of the free subunits, thus enhancing the availability of 28S subunits on which protein synthesis initiation begins. The sequence is that of Translation initiation factor IF-3, mitochondrial (MTIF3) from Homo sapiens (Human).